A 752-amino-acid chain; its full sequence is Mitochondrial Rho GTPase 1 (752 aa).

Residues 1-671 (MRKDVRIVLA…RNALSYGTNR (671 aa)) lie on the Cytoplasmic side of the membrane. A Miro 1 domain is found at 2–170 (RKDVRIVLAG…FYFAQKAVLY (169 aa)). GTP contacts are provided by residues 11-18 (GDPDVGKS), 57-61 (DTSSS), and 115-118 (NKID). 2 consecutive EF-hand domains span residues 186–221 (ACVD…CFDT) and 333–368 (NGYQ…APDN). Ca(2+) is bound by residues aspartate 199, aspartate 201, aspartate 203, glutamate 210, aspartate 346, aspartate 348, aspartate 350, and glutamate 357. The interval 426-460 (SSGSASTPAPIPLTPTGPPGSRPSRNRTPCPPSTI) is disordered. Residues 434–446 (APIPLTPTGPPGS) show a composition bias toward pro residues. A Miro 2 domain is found at 481–651 (RSVFLGFVLG…YGLICTIAVD (171 aa)). Residues 490-497 (GAAGSGKT), 526-530 (EQAGA), and 595-598 (TKAD) contribute to the GTP site. The chain crosses the membrane as a helical; Anchor for type IV membrane protein span at residues 672 to 692 (WQFWGYIGLVVIGGGGAVWIC). Topologically, residues 693-752 (AKVLKVPIGSTLGFGSSASTTSWWLSGAQARGAGGPNATKVSSWFDWIRWQSSSNVRSEL) are mitochondrial intermembrane.

Belongs to the mitochondrial Rho GTPase family.

The protein localises to the mitochondrion outer membrane. Mitochondrial GTPase involved in mitochondrial trafficking. Probably involved in control of anterograde transport of mitochondria and their subcellular distribution. The polypeptide is Mitochondrial Rho GTPase 1 (GEM1) (Mycosarcoma maydis (Corn smut fungus)).